Here is a 216-residue protein sequence, read N- to C-terminus: Small ribosomal subunit protein uS3 (216 aa).

Positions 39–111 (IYKFFDKLVR…DINLQVSLLK (73 aa)) constitute a KH type-2 domain.

The protein belongs to the universal ribosomal protein uS3 family. In terms of assembly, part of the 30S ribosomal subunit. Forms a tight complex with proteins S10 and S14.

Functionally, binds the lower part of the 30S subunit head. Binds mRNA in the 70S ribosome, positioning it for translation. In Mycoplasmopsis agalactiae (strain NCTC 10123 / CIP 59.7 / PG2) (Mycoplasma agalactiae), this protein is Small ribosomal subunit protein uS3.